The following is a 463-amino-acid chain: ATP-dependent protease ATPase subunit HslU (463 aa).

ATP is bound by residues isoleucine 19, glycine 61–glutamate 66, aspartate 277, glutamate 341, and arginine 413.

This sequence belongs to the ClpX chaperone family. HslU subfamily. In terms of assembly, a double ring-shaped homohexamer of HslV is capped on each side by a ring-shaped HslU homohexamer. The assembly of the HslU/HslV complex is dependent on binding of ATP.

Its subcellular location is the cytoplasm. In terms of biological role, ATPase subunit of a proteasome-like degradation complex; this subunit has chaperone activity. The binding of ATP and its subsequent hydrolysis by HslU are essential for unfolding of protein substrates subsequently hydrolyzed by HslV. HslU recognizes the N-terminal part of its protein substrates and unfolds these before they are guided to HslV for hydrolysis. The polypeptide is ATP-dependent protease ATPase subunit HslU (Bacillus anthracis (strain A0248)).